A 410-amino-acid chain; its full sequence is Serine/threonine transporter SstT (410 aa).

A run of 10 helical transmembrane segments spans residues 15-35 (GSLVTQIMVGLVAGIALAWLS), 49-69 (FVNALKAVAPLLVLVLVISSI), 82-102 (PIVMLYLLSTFFAAVVAVVAS), 118-138 (IVPPSGILEVLHGLLMSMVTN), 142-162 (AVMKANYIGILVWAIGLGFAF), 190-210 (FAPVGIFGLVASILASTGFDA), 217-237 (LLGLLLGCMLLMALVFNPLLV), 299-319 (MAGASITITVLTLAAVHTLGI), 331-351 (LVASVCACGASGVAGGSLLLI), and 358-378 (FGIPNEIAMQVVAVGFIIGVL).

The protein belongs to the dicarboxylate/amino acid:cation symporter (DAACS) (TC 2.A.23) family.

Its subcellular location is the cell inner membrane. The catalysed reaction is L-serine(in) + Na(+)(in) = L-serine(out) + Na(+)(out). It carries out the reaction L-threonine(in) + Na(+)(in) = L-threonine(out) + Na(+)(out). Its function is as follows. Involved in the import of serine and threonine into the cell, with the concomitant import of sodium (symport system). The protein is Serine/threonine transporter SstT of Erwinia tasmaniensis (strain DSM 17950 / CFBP 7177 / CIP 109463 / NCPPB 4357 / Et1/99).